The following is a 73-amino-acid chain: Conotoxin Bt11.1 (73 aa).

The first 20 residues, 1–20, serve as a signal peptide directing secretion; the sequence is MKLCVAFLLVLVILPSVIGG. Residues 21-35 constitute a propeptide that is removed on maturation; that stretch reads KPSERTLSGATRRGD. 4 disulfide bridges follow: cysteine 39/cysteine 53, cysteine 46/cysteine 58, cysteine 52/cysteine 63, and cysteine 57/cysteine 70.

It belongs to the conotoxin I1 superfamily. Expressed by the venom duct.

The protein resides in the secreted. This is Conotoxin Bt11.1 from Conus betulinus (Beech cone).